The primary structure comprises 336 residues: Holliday junction branch migration complex subunit RuvB (336 aa).

A large ATPase domain (RuvB-L) region spans residues 4 to 184; sequence ADRLISAGTT…FGIVQRLEFY (181 aa). ATP is bound by residues isoleucine 23, arginine 24, glycine 65, lysine 68, threonine 69, threonine 70, 131 to 133, arginine 174, tyrosine 184, and arginine 221; that span reads EDY. Threonine 69 lines the Mg(2+) pocket. The segment at 185 to 255 is small ATPAse domain (RuvB-S); it reads QVPDLQYIVS…IAAQALDMLN (71 aa). Positions 258–336 are head domain (RuvB-H); sequence AEGFDYMDRK…HFGITPPEMP (79 aa). DNA is bound by residues arginine 294, arginine 313, and arginine 318.

The protein belongs to the RuvB family. Homohexamer. Forms an RuvA(8)-RuvB(12)-Holliday junction (HJ) complex. HJ DNA is sandwiched between 2 RuvA tetramers; dsDNA enters through RuvA and exits via RuvB. An RuvB hexamer assembles on each DNA strand where it exits the tetramer. Each RuvB hexamer is contacted by two RuvA subunits (via domain III) on 2 adjacent RuvB subunits; this complex drives branch migration. In the full resolvosome a probable DNA-RuvA(4)-RuvB(12)-RuvC(2) complex forms which resolves the HJ.

The protein resides in the cytoplasm. The enzyme catalyses ATP + H2O = ADP + phosphate + H(+). In terms of biological role, the RuvA-RuvB-RuvC complex processes Holliday junction (HJ) DNA during genetic recombination and DNA repair, while the RuvA-RuvB complex plays an important role in the rescue of blocked DNA replication forks via replication fork reversal (RFR). RuvA specifically binds to HJ cruciform DNA, conferring on it an open structure. The RuvB hexamer acts as an ATP-dependent pump, pulling dsDNA into and through the RuvAB complex. RuvB forms 2 homohexamers on either side of HJ DNA bound by 1 or 2 RuvA tetramers; 4 subunits per hexamer contact DNA at a time. Coordinated motions by a converter formed by DNA-disengaged RuvB subunits stimulates ATP hydrolysis and nucleotide exchange. Immobilization of the converter enables RuvB to convert the ATP-contained energy into a lever motion, pulling 2 nucleotides of DNA out of the RuvA tetramer per ATP hydrolyzed, thus driving DNA branch migration. The RuvB motors rotate together with the DNA substrate, which together with the progressing nucleotide cycle form the mechanistic basis for DNA recombination by continuous HJ branch migration. Branch migration allows RuvC to scan DNA until it finds its consensus sequence, where it cleaves and resolves cruciform DNA. In Shigella flexneri serotype 5b (strain 8401), this protein is Holliday junction branch migration complex subunit RuvB.